The sequence spans 200 residues: NAD(P)H dehydrogenase (quinone) (200 aa).

Positions 7–199 (LAIVFYSSTG…RQVELTAKLL (193 aa)) constitute a Flavodoxin-like domain. FMN-binding positions include 13 to 18 (SSTGTG), 86 to 88 (TRF), 121 to 127 (SAQNVNG), and histidine 142.

It belongs to the WrbA family. In terms of assembly, homotetramer. FMN serves as cofactor.

It carries out the reaction a quinone + NADH + H(+) = a quinol + NAD(+). It catalyses the reaction a quinone + NADPH + H(+) = a quinol + NADP(+). This Deinococcus radiodurans (strain ATCC 13939 / DSM 20539 / JCM 16871 / CCUG 27074 / LMG 4051 / NBRC 15346 / NCIMB 9279 / VKM B-1422 / R1) protein is NAD(P)H dehydrogenase (quinone).